Here is a 362-residue protein sequence, read N- to C-terminus: Probable cysteine protease RDL2 (362 aa).

The signal sequence occupies residues 1 to 28; sequence MAATPIRVIVSALVILSVLLLSSSLGVA. Positions 29 to 129 are cleaved as a propeptide — activation peptide; it reads TETEIERNET…ERYLYKEGDV (101 aa). An N-linked (GlcNAc...) asparagine glycan is attached at Asn-36. Intrachain disulfides connect Cys-151–Cys-194 and Cys-185–Cys-228. Cys-154 is an active-site residue. Asn-234 carries an N-linked (GlcNAc...) asparagine glycan. A disulfide bridge links Cys-287 with Cys-338. Residues His-293 and Asn-313 contribute to the active site.

The protein belongs to the peptidase C1 family.

Functionally, probable thiol protease. The chain is Probable cysteine protease RDL2 from Arabidopsis thaliana (Mouse-ear cress).